The chain runs to 231 residues: Putative N-acetylmannosamine-6-phosphate 2-epimerase (231 aa).

It belongs to the NanE family.

It catalyses the reaction an N-acyl-D-glucosamine 6-phosphate = an N-acyl-D-mannosamine 6-phosphate. It participates in amino-sugar metabolism; N-acetylneuraminate degradation; D-fructose 6-phosphate from N-acetylneuraminate: step 3/5. In terms of biological role, converts N-acetylmannosamine-6-phosphate (ManNAc-6-P) to N-acetylglucosamine-6-phosphate (GlcNAc-6-P). This chain is Putative N-acetylmannosamine-6-phosphate 2-epimerase, found in Listeria monocytogenes serotype 4b (strain CLIP80459).